A 492-amino-acid polypeptide reads, in one-letter code: NADH-quinone oxidoreductase subunit N (492 aa).

A run of 14 helical transmembrane segments spans residues 16 to 36 (LLIP…VGVF), 44 to 64 (LYIT…FLEG), 81 to 101 (ISLL…LFFM), 111 to 131 (GAEF…MASS), 134 to 154 (LILI…LIAL), 168 to 188 (FIMG…LYAA), 210 to 230 (ILVF…VTLV), 244 to 264 (NALL…AVII), 276 to 296 (AFVE…PNLI), 306 to 326 (MLAY…LINT), 332 to 352 (VIFF…GILW), 382 to 402 (LAIL…FCVF), 423 to 443 (IMAI…IYIF), and 463 to 483 (FALS…QNLL).

It belongs to the complex I subunit 2 family. In terms of assembly, NDH-1 is composed of 14 different subunits. Subunits NuoA, H, J, K, L, M, N constitute the membrane sector of the complex.

Its subcellular location is the cell inner membrane. The catalysed reaction is a quinone + NADH + 5 H(+)(in) = a quinol + NAD(+) + 4 H(+)(out). Functionally, NDH-1 shuttles electrons from NADH, via FMN and iron-sulfur (Fe-S) centers, to quinones in the respiratory chain. The immediate electron acceptor for the enzyme in this species is believed to be ubiquinone. Couples the redox reaction to proton translocation (for every two electrons transferred, four hydrogen ions are translocated across the cytoplasmic membrane), and thus conserves the redox energy in a proton gradient. This Helicobacter hepaticus (strain ATCC 51449 / 3B1) protein is NADH-quinone oxidoreductase subunit N.